A 65-amino-acid polypeptide reads, in one-letter code: Large ribosomal subunit protein uL29 (65 aa).

This sequence belongs to the universal ribosomal protein uL29 family.

The sequence is that of Large ribosomal subunit protein uL29 from Buchnera aphidicola subsp. Baizongia pistaciae (strain Bp).